The primary structure comprises 951 residues: MEKTYNPQDIEQPLYEHWEKQGYFKPNGDESKESFCIMIPPPNVTGSLHMGHAFQQTIMDTMIRYQRMQGKNTLWQVGTDHAGIATQMVVERKIAAEEGKTRHDYGRDAFIDKIWQWKAESGGTITRQMRRLGNSVDWERERFTMDEGLSNAVKEVFVRLYKEDLIYRGKRLVNWDPKLRTAISDLEVENRESKGSMWHIRYPLADGAKTADGKDYLVVATTRPETILGDTGVAVNPEDPRYQSLIGKFVILPLVNRRIPIVGDEHADMEKGTGCVKITPAHDFNDYEVGKRHALPMINILTFDGDIRESAEVFDTKGEESDVYSSEIPAEFQKLERFAARKAIVAAVDALGLLEEIKPHDLTVPYGDRGGVVIEPMLTDQWYVRADVLAKPAVEAVENGDIQFVPKQYENMYFSWMRDIQDWCISRQLWWGHRIPAWYDNDGNVYVGRTEDEVRQENNLGADVALRQDEDVLDTWFSSALWTFSTLGWPENTDALRQFHPTSVMVSGFDIIFFWIARMIMMTMHFIKDENGKPQVPFHTVYMTGLIRDDEGQKMSKSKGNVIDPLDMVDGISLPELLEKRTGNMMQPQMAEKIRKRTEKQFPNGIEPHGTDALRFTLAALASTGRDINWDMKRLEGYRNFCNKLWNASRFVLMNTEEQDCGFNGGEMTLSLADRWILAEFNQTVKAYREALDNFRFDIAAGILYEFTWNQFCDWYLELTKPVMTGGSESELRGTRHTLVTVLEGLLRLAHPIIPFITETIWQRVKVICGITADTIMLQPFPEYNAAQVDEAALADTEWLKQAIVAVRNIRAEMNIAPGKPLELLLRGCSEEAVRRVNDNRSFLQTLARLESITVLPADDKGPVSVTKIIDGAELLIPMAGLINKDDELARLAKEVAKIEGEIARIEGKLSNEGFVARAPEAVIAKEREKLDSYAEAKAKLIEQQAVISAL.

The 'HIGH' region motif lies at 42–52 (PNVTGSLHMGH). A 'KMSKS' region motif is present at residues 554 to 558 (KMSKS). Residue Lys-557 coordinates ATP. Residues 882 to 944 (LINKDDELAR…AEAKAKLIEQ (63 aa)) are a coiled coil.

The protein belongs to the class-I aminoacyl-tRNA synthetase family. ValS type 1 subfamily. Monomer.

Its subcellular location is the cytoplasm. The enzyme catalyses tRNA(Val) + L-valine + ATP = L-valyl-tRNA(Val) + AMP + diphosphate. Functionally, catalyzes the attachment of valine to tRNA(Val). As ValRS can inadvertently accommodate and process structurally similar amino acids such as threonine, to avoid such errors, it has a 'posttransfer' editing activity that hydrolyzes mischarged Thr-tRNA(Val) in a tRNA-dependent manner. The protein is Valine--tRNA ligase of Salmonella choleraesuis (strain SC-B67).